The primary structure comprises 142 residues: Large ribosomal subunit protein uL13 (142 aa).

Belongs to the universal ribosomal protein uL13 family. In terms of assembly, part of the 50S ribosomal subunit.

Functionally, this protein is one of the early assembly proteins of the 50S ribosomal subunit, although it is not seen to bind rRNA by itself. It is important during the early stages of 50S assembly. In Syntrophotalea carbinolica (strain DSM 2380 / NBRC 103641 / GraBd1) (Pelobacter carbinolicus), this protein is Large ribosomal subunit protein uL13.